We begin with the raw amino-acid sequence, 395 residues long: Alanine racemase 2 (395 aa).

The Proton acceptor; specific for D-alanine role is filled by Lys60. An N6-(pyridoxal phosphate)lysine modification is found at Lys60. A substrate-binding site is contributed by Arg158. The active-site Proton acceptor; specific for L-alanine is Tyr288. Residue Met332 participates in substrate binding.

Belongs to the alanine racemase family. The cofactor is pyridoxal 5'-phosphate.

The enzyme catalyses L-alanine = D-alanine. The protein operates within amino-acid biosynthesis; D-alanine biosynthesis; D-alanine from L-alanine: step 1/1. Its function is as follows. Catalyzes the interconversion of L-alanine and D-alanine. May also act on other amino acids. The polypeptide is Alanine racemase 2 (alr2) (Clostridium acetobutylicum (strain ATCC 824 / DSM 792 / JCM 1419 / IAM 19013 / LMG 5710 / NBRC 13948 / NRRL B-527 / VKM B-1787 / 2291 / W)).